Reading from the N-terminus, the 349-residue chain is Protein RecA (349 aa).

ATP is bound at residue 69–76 (GPESSGKT).

It belongs to the RecA family.

The protein resides in the cytoplasm. Its function is as follows. Can catalyze the hydrolysis of ATP in the presence of single-stranded DNA, the ATP-dependent uptake of single-stranded DNA by duplex DNA, and the ATP-dependent hybridization of homologous single-stranded DNAs. It interacts with LexA causing its activation and leading to its autocatalytic cleavage. The chain is Protein RecA from Crocosphaera subtropica (strain ATCC 51142 / BH68) (Cyanothece sp. (strain ATCC 51142)).